A 201-amino-acid chain; its full sequence is Putative ankyrin repeat protein YahD (201 aa).

ANK repeat units follow at residues 5 to 34 (NLPA…DINT), 38 to 67 (QGKT…DINK), 71 to 100 (TCLN…DLNC), 104 to 134 (FGGV…NVNQ), 138 to 172 (VGWT…SPHL), and 176 to 201 (YGKT…AAGA).

The sequence is that of Putative ankyrin repeat protein YahD (yahD) from Escherichia coli (strain K12).